The sequence spans 134 residues: Large ribosomal subunit protein uL16c (134 aa).

Residues 1–17 (MLSPKRTRFRKQHRGRM) are compositionally biased toward basic residues. The segment at 1–22 (MLSPKRTRFRKQHRGRMKGISS) is disordered.

This sequence belongs to the universal ribosomal protein uL16 family. In terms of assembly, part of the 50S ribosomal subunit.

The protein resides in the plastid. Its subcellular location is the chloroplast. The chain is Large ribosomal subunit protein uL16c from Solanum tuberosum (Potato).